The chain runs to 1771 residues: Myosin-H heavy chain (1771 aa).

In terms of domain architecture, Myosin N-terminal SH3-like spans C7 to P57. One can recognise a Myosin motor domain in the interval E61–S840. Residue G154–T161 participates in ATP binding. Residues L690–T712 are actin-binding. IQ domains lie at M843–Y872, T866–A895, and R940–S969. 3 disordered regions span residues E1070–D1176, V1218–M1282, and L1312–Q1343. The segment covering Y1077–R1111 has biased composition (polar residues). Residues N1112–S1139 show a composition bias toward low complexity. Residues H1143 to E1153 are compositionally biased toward basic and acidic residues. Residues R1180–H1224 are a coiled coil. Positions N1253–N1281 are enriched in low complexity. The region spanning T1427 to Y1695 is the Dilute domain.

It belongs to the TRAFAC class myosin-kinesin ATPase superfamily. Myosin family. Myosin I heavy chain is single-headed. Dimer of a heavy and a light chain. Inability to self-assemble into filaments.

In terms of biological role, myosin is a protein that binds to actin and has ATPase activity that is activated by actin. This chain is Myosin-H heavy chain (myoH), found in Dictyostelium discoideum (Social amoeba).